A 181-amino-acid polypeptide reads, in one-letter code: Protein csk22 (181 aa).

5 helical membrane-spanning segments follow: residues 5-22 (LQSVYPAIIIIFFLYKKI), 35-57 (WLFTRIILFSLFAFGLSIFSAIH), 61-78 (YGYLILGILGGWLLVFFA), 91-113 (IYFRTHIWVEVILLTLFLSRFLY), and 140-162 (LTIGVCFLIAVYYIGFSSFIIKL).

It localises to the cell membrane. The sequence is that of Protein csk22 (csk22) from Bacillus subtilis (strain 168).